The chain runs to 122 residues: MSSPEIASLSWGQMKVQGSTKIYKDCKVWPGGSRDWDWRETGTEHSPGVQPADVEEVVEKGVQILVIGRGMSEALKVPPSTVEYLKKKGIDVRVLQTEQAVKEYNALATQGIRVGGVFHSTC.

Residues 6-122 (IASLSWGQMK…RVGGVFHSTC (117 aa)) form an MTH138-like domain region.

Belongs to the AAMDC family.

The protein resides in the cytoplasm. May play a role in preadipocyte differentiation and adipogenesis. This chain is Mth938 domain-containing protein (AAMDC), found in Bos taurus (Bovine).